The sequence spans 280 residues: 4-deoxy-L-threo-5-hexosulose-uronate ketol-isomerase (280 aa).

The Zn(2+) site is built by H198, H200, E205, and H247.

This sequence belongs to the KduI family. Zn(2+) serves as cofactor.

It carries out the reaction 5-dehydro-4-deoxy-D-glucuronate = 3-deoxy-D-glycero-2,5-hexodiulosonate. The protein operates within glycan metabolism; pectin degradation; 2-dehydro-3-deoxy-D-gluconate from pectin: step 4/5. Its function is as follows. Catalyzes the isomerization of 5-dehydro-4-deoxy-D-glucuronate to 3-deoxy-D-glycero-2,5-hexodiulosonate. This chain is 4-deoxy-L-threo-5-hexosulose-uronate ketol-isomerase, found in Bacteroides fragilis (strain ATCC 25285 / DSM 2151 / CCUG 4856 / JCM 11019 / LMG 10263 / NCTC 9343 / Onslow / VPI 2553 / EN-2).